Consider the following 303-residue polypeptide: ATP phosphoribosyltransferase (303 aa).

It belongs to the ATP phosphoribosyltransferase family. Long subfamily. Requires Mg(2+) as cofactor.

Its subcellular location is the cytoplasm. The catalysed reaction is 1-(5-phospho-beta-D-ribosyl)-ATP + diphosphate = 5-phospho-alpha-D-ribose 1-diphosphate + ATP. Its pathway is amino-acid biosynthesis; L-histidine biosynthesis; L-histidine from 5-phospho-alpha-D-ribose 1-diphosphate: step 1/9. With respect to regulation, feedback inhibited by histidine. Functionally, catalyzes the condensation of ATP and 5-phosphoribose 1-diphosphate to form N'-(5'-phosphoribosyl)-ATP (PR-ATP). Has a crucial role in the pathway because the rate of histidine biosynthesis seems to be controlled primarily by regulation of HisG enzymatic activity. The protein is ATP phosphoribosyltransferase of Haemophilus influenzae (strain 86-028NP).